Consider the following 234-residue polypeptide: uncharacterized protein (234 aa).

Residues 199-234 (DNQNEPLENYSDDNNFSNFDETEHVDDSEMNDDNFI) form a disordered region.

This is an uncharacterized protein from Buchnera aphidicola subsp. Schizaphis graminum (strain Sg).